Here is a 502-residue protein sequence, read N- to C-terminus: ATP synthase subunit alpha (502 aa).

An ATP-binding site is contributed by 169 to 176; sequence GDRQTGKT.

It belongs to the ATPase alpha/beta chains family. In terms of assembly, F-type ATPases have 2 components, CF(1) - the catalytic core - and CF(0) - the membrane proton channel. CF(1) has five subunits: alpha(3), beta(3), gamma(1), delta(1), epsilon(1). CF(0) has three main subunits: a(1), b(2) and c(9-12). The alpha and beta chains form an alternating ring which encloses part of the gamma chain. CF(1) is attached to CF(0) by a central stalk formed by the gamma and epsilon chains, while a peripheral stalk is formed by the delta and b chains.

It localises to the cell inner membrane. It catalyses the reaction ATP + H2O + 4 H(+)(in) = ADP + phosphate + 5 H(+)(out). Its function is as follows. Produces ATP from ADP in the presence of a proton gradient across the membrane. The alpha chain is a regulatory subunit. This is ATP synthase subunit alpha from Oleidesulfovibrio alaskensis (strain ATCC BAA-1058 / DSM 17464 / G20) (Desulfovibrio alaskensis).